The chain runs to 902 residues: Calcium-activated chloride channel regulator 3A-1 (902 aa).

The signal sequence occupies residues 1–21; it reads MVPGLQVLLFLTLHLLQNTES. Positions 45-199 are metalloprotease domain; sequence DERLIPSIKE…RITGTNVVHN (155 aa). The N-linked (GlcNAc...) asparagine glycan is linked to Asn75. His155 is a Zn(2+) binding site. The active site involves Glu156. Residues His159 and Asp166 each coordinate Zn(2+). Residues 308 to 476 enclose the VWFA domain; sequence VVCLVLDKSG…NSLIDAFSRI (169 aa). N-linked (GlcNAc...) asparagine glycosylation is found at Asn504, Asn515, Asn630, Asn687, Asn697, Asn809, and Asn814.

Belongs to the CLCR family. In terms of assembly, part of a complex composed of complement component C3, CLCA1/CLCA3, A2ML1/OH and ALB/serum albumin. Post-translationally, glycosylated. In terms of processing, the 130-kDa product is autoproteolytically processed by the metalloprotease domain and yields two subunits, a 90-kDa protein and a group of 32- to 38-kDa proteins. The cleavage is necessary for calcium-activated chloride channel (CaCC) activation activity. In terms of tissue distribution, highly expressed in skin and spleen, and at lower levels in kidney and liver. Also detected in lung and brain. Not detected in lung or brain. In lung, localizes to respiratory epithelia of the bronchi and trachea and the submucosal glands.

The protein localises to the cell membrane. In terms of biological role, plays a role in modulating chloride current across the plasma membrane in a calcium-dependent manner. This is Calcium-activated chloride channel regulator 3A-1 from Mus musculus (Mouse).